The sequence spans 296 residues: UDP-N-acetylenolpyruvoylglucosamine reductase (296 aa).

One can recognise an FAD-binding PCMH-type domain in the interval 26-191 (RIGGPANYFK…LSATFRLSRN (166 aa)). Arg170 is a catalytic residue. Catalysis depends on Cys218, which acts as the Proton donor. Glu287 is a catalytic residue.

Belongs to the MurB family. Requires FAD as cofactor.

Its subcellular location is the cytoplasm. The enzyme catalyses UDP-N-acetyl-alpha-D-muramate + NADP(+) = UDP-N-acetyl-3-O-(1-carboxyvinyl)-alpha-D-glucosamine + NADPH + H(+). The protein operates within cell wall biogenesis; peptidoglycan biosynthesis. Functionally, cell wall formation. The chain is UDP-N-acetylenolpyruvoylglucosamine reductase from Chlamydia abortus (strain DSM 27085 / S26/3) (Chlamydophila abortus).